Here is a 216-residue protein sequence, read N- to C-terminus: ATP-dependent dethiobiotin synthetase BioD (216 aa).

12–17 lines the ATP pocket; that stretch reads NVGKTF. Threonine 16 serves as a coordination point for Mg(2+). The active site involves lysine 36. A substrate-binding site is contributed by serine 40. Residues aspartate 53, 110-113, and 170-171 contribute to the ATP site; these read EGAG and NQ. The Mg(2+) site is built by aspartate 53 and glutamate 110.

It belongs to the dethiobiotin synthetase family. Homodimer. The cofactor is Mg(2+).

Its subcellular location is the cytoplasm. It carries out the reaction (7R,8S)-7,8-diammoniononanoate + CO2 + ATP = (4R,5S)-dethiobiotin + ADP + phosphate + 3 H(+). It functions in the pathway cofactor biosynthesis; biotin biosynthesis; biotin from 7,8-diaminononanoate: step 1/2. Its function is as follows. Catalyzes a mechanistically unusual reaction, the ATP-dependent insertion of CO2 between the N7 and N8 nitrogen atoms of 7,8-diaminopelargonic acid (DAPA, also called 7,8-diammoniononanoate) to form a ureido ring. The chain is ATP-dependent dethiobiotin synthetase BioD from Vesicomyosocius okutanii subsp. Calyptogena okutanii (strain HA).